A 140-amino-acid chain; its full sequence is Lysozyme E (140 aa).

A signal peptide spans 1 to 18; that stretch reads MKAFIVLVALAMAAPALG. The C-type lysozyme domain occupies 19-140; the sequence is RTLDRCSLAR…GWLPSIDGCF (122 aa). Intrachain disulfides connect C24–C139, C45–C129, C80–C96, and C92–C110. Catalysis depends on residues E50 and D68.

This sequence belongs to the glycosyl hydrolase 22 family. As to expression, found in the midgut.

The catalysed reaction is Hydrolysis of (1-&gt;4)-beta-linkages between N-acetylmuramic acid and N-acetyl-D-glucosamine residues in a peptidoglycan and between N-acetyl-D-glucosamine residues in chitodextrins.. Unlikely to play an active role in the humoral immune defense. May have a function in the digestion of bacteria in the food. The chain is Lysozyme E (LysE) from Drosophila melanogaster (Fruit fly).